Reading from the N-terminus, the 214-residue chain is Capsid assembly scaffolding protein (214 aa).

Positions 36-105 (KEKFDAVNSE…QQLKYEHALE (70 aa)) form a coiled coil. Residues 154 to 190 (KGTEPNGGVQGTPPPGKGADLGGLPTKKNPFKQGPDF) form a disordered region.

This sequence belongs to the SPP1-like scaffolding protein family. Homodimer. Interacts with the capsid protein gp13.

Scaffolding protein involved in the icosahedric procapsid assembly. Coassembles with the capsid proteins to form the procapsid, in which the scaffolding protein is found within the external shell of icosahedrally arranged capsid protein subunits. In a subsequent step the scaffolding protein molecules are released from the procapsid. In Bacillus phage SPP1 (Bacteriophage SPP1), this protein is Capsid assembly scaffolding protein.